The sequence spans 1256 residues: Pullulanase A (1256 aa).

Positions Met-1–Ser-44 are cleaved as a signal peptide. The interval Ile-42–Pro-117 is disordered. The segment covering Thr-48 to Thr-61 has biased composition (low complexity). Over residues Asp-79 to Leu-90 the composition is skewed to polar residues. A compositionally biased stretch (low complexity) spans Thr-99–Glu-111. Substrate contacts are provided by residues Trp-141–Trp-143, Trp-153, Asp-199, Trp-248–Trp-250, Trp-261, Lys-303, and Asn-308. 2 residues coordinate Ca(2+): Ser-646 and Tyr-648. Residues Tyr-652 to Asp-653 and Phe-728 each bind substrate. The active-site Nucleophile is the Asp-763. Glu-792 serves as the catalytic Proton donor. Trp-794 provides a ligand contact to substrate. Residues Met-813, Thr-816, and Asp-817 each coordinate Ca(2+). Substrate contacts are provided by Asp-824, Arg-827, and Tyr-834. Ca(2+)-binding residues include Asp-867 and Asp-871. Substrate contacts are provided by residues Asn-881, Lys-954, and Asp-974 to Tyr-976. Position 977 (Asp-977) interacts with Ca(2+). The interval Ser-1126 to Asn-1224 is disordered. Basic and acidic residues predominate over residues Ser-1134–Asn-1172. A compositionally biased stretch (low complexity) spans Ser-1181–Ser-1194. Polar residues predominate over residues Gln-1200–Lys-1210. Positions Leu-1222–Gly-1226 match the LPXTG sorting signal motif. The residue at position 1225 (Thr-1225) is a Pentaglycyl murein peptidoglycan amidated threonine. The propeptide at Gly-1226–Asn-1256 is removed by sortase.

This sequence belongs to the glycosyl hydrolase 13 family.

It is found in the secreted. Its subcellular location is the cell wall. It localises to the cell surface. It carries out the reaction Hydrolysis of (1-&gt;6)-alpha-D-glucosidic linkages in pullulan, amylopectin and glycogen, and in the alpha- and beta-limit dextrins of amylopectin and glycogen.. With respect to regulation, inhibited by 4-O-alpha-D-glucopyranosylmoranoline (G1M). Virulence factor. Involved in the degradation of glycogen of the mammalian host cells. Hydrolyzes the alpha-1,6-branchpoints of glycogen. Hydrolyzes pullulan. Does not hydrolyze dextran. Binds to mouse lung alveolar type II cells that are rich in glycogen stores. Is an alpha-glucan-specific carbohydrate-binding protein, which binds to amylose (pure alpha-(1,4)-linked glucose), amylopectin (alpha-(1,4)-linked glucose with alpha-(1,6) branch points), pullulan (linear polymer of mixed alpha-(1,4)- and alpha-(1,6)-linked glucose) and glycogen (similar to amylopectin with more frequent alpha-(1,6) branch points) in vitro. Does not bind to dextran (a linear polymer of alpha-(1,6)-linked glucose). This chain is Pullulanase A, found in Streptococcus pneumoniae serotype 2 (strain D39 / NCTC 7466).